Here is a 152-residue protein sequence, read N- to C-terminus: Xanthine-guanine phosphoribosyltransferase (152 aa).

5-phospho-alpha-D-ribose 1-diphosphate contacts are provided by residues Arg-37 to Gly-38, Arg-69, and Asp-88 to Thr-96. Arg-69 contacts GMP. Residue Asp-89 coordinates Mg(2+). Positions 92 and 135 each coordinate guanine. Xanthine is bound by residues Asp-92 and Ile-135. Residues Asp-92–Thr-96 and Trp-134–Ile-135 each bind GMP.

This sequence belongs to the purine/pyrimidine phosphoribosyltransferase family. XGPT subfamily. As to quaternary structure, homotetramer. It depends on Mg(2+) as a cofactor.

It localises to the cell inner membrane. The catalysed reaction is GMP + diphosphate = guanine + 5-phospho-alpha-D-ribose 1-diphosphate. It catalyses the reaction XMP + diphosphate = xanthine + 5-phospho-alpha-D-ribose 1-diphosphate. It carries out the reaction IMP + diphosphate = hypoxanthine + 5-phospho-alpha-D-ribose 1-diphosphate. The protein operates within purine metabolism; GMP biosynthesis via salvage pathway; GMP from guanine: step 1/1. It functions in the pathway purine metabolism; XMP biosynthesis via salvage pathway; XMP from xanthine: step 1/1. In terms of biological role, purine salvage pathway enzyme that catalyzes the transfer of the ribosyl-5-phosphate group from 5-phospho-alpha-D-ribose 1-diphosphate (PRPP) to the N9 position of the 6-oxopurines guanine and xanthine to form the corresponding ribonucleotides GMP (guanosine 5'-monophosphate) and XMP (xanthosine 5'-monophosphate), with the release of PPi. To a lesser extent, also acts on hypoxanthine. The chain is Xanthine-guanine phosphoribosyltransferase from Erwinia tasmaniensis (strain DSM 17950 / CFBP 7177 / CIP 109463 / NCPPB 4357 / Et1/99).